The chain runs to 87 residues: MKTKLNELLEFPCSFTYKVMGLAQPELVDQVVEVVQRHAPGDYNPQVKPSSKGNYHSVSITITATHIDQVETLYDELGNIEIVRMVL.

Belongs to the UPF0250 family.

This Serratia proteamaculans (strain 568) protein is UPF0250 protein Spro_1197.